Reading from the N-terminus, the 188-residue chain is Heterodisulfide reductase subunit C-like protein (188 aa).

4Fe-4S ferredoxin-type domains are found at residues 34–64 (KELGAERLMYCMQCGACASICPLARVGFEWY) and 78–109 (DELLDDPTPWACVACNRCTEICPRRVSPFEVM). [4Fe-4S] cluster contacts are provided by cysteine 44, cysteine 47, cysteine 50, cysteine 54, cysteine 89, cysteine 92, cysteine 95, and cysteine 99.

This sequence belongs to the HdrC family. In terms of assembly, the heterodisulfide reductase is composed of three subunits; HdlA, HdlB and HdlC. It forms a complex with the F420-non-reducing hydrogenase (Mvh), which provides the reducing equivalents to the heterodisulfide reductase.

It localises to the cytoplasm. Functionally, has oxidoreductase activity. The Hdl and Mvh subunits may together mediate electron transfer from hydrogen to an unidentified electron acceptor on the cytoplasmic side of the membrane. This chain is Heterodisulfide reductase subunit C-like protein (hdlC), found in Archaeoglobus profundus (strain DSM 5631 / JCM 9629 / NBRC 100127 / Av18).